We begin with the raw amino-acid sequence, 114 residues long: Somatostatin-1A (114 aa).

The signal sequence occupies residues 1–24 (MLSTRIQCALALLSLALAVCSVSA). Positions 25 to 88 (APTDAKLRQL…KDEVRLELER (64 aa)) are excised as a propeptide. A disulfide bond links cysteine 103 and cysteine 114.

It belongs to the somatostatin family.

It localises to the secreted. In terms of biological role, somatostatin inhibits the release of somatotropin. This Carassius auratus (Goldfish) protein is Somatostatin-1A (sst1a).